The primary structure comprises 249 residues: 1-(5-phosphoribosyl)-5-[(5-phosphoribosylamino)methylideneamino] imidazole-4-carboxamide isomerase (249 aa).

Residue aspartate 11 is the Proton acceptor of the active site. Aspartate 133 functions as the Proton donor in the catalytic mechanism.

Belongs to the HisA/HisF family.

The protein resides in the cytoplasm. It catalyses the reaction 1-(5-phospho-beta-D-ribosyl)-5-[(5-phospho-beta-D-ribosylamino)methylideneamino]imidazole-4-carboxamide = 5-[(5-phospho-1-deoxy-D-ribulos-1-ylimino)methylamino]-1-(5-phospho-beta-D-ribosyl)imidazole-4-carboxamide. The protein operates within amino-acid biosynthesis; L-histidine biosynthesis; L-histidine from 5-phospho-alpha-D-ribose 1-diphosphate: step 4/9. In Actinobacillus succinogenes (strain ATCC 55618 / DSM 22257 / CCUG 43843 / 130Z), this protein is 1-(5-phosphoribosyl)-5-[(5-phosphoribosylamino)methylideneamino] imidazole-4-carboxamide isomerase.